A 573-amino-acid polypeptide reads, in one-letter code: Sulfate adenylyltransferase (573 aa).

The tract at residues 1–169 (MANSPHGGVL…LEAVNRLQHY (169 aa)) is N-terminal. A catalytic region spans residues 170–394 (DFVELRYTPS…LRESHPPRSQ (225 aa)). Gln-197 is a binding site for sulfate. ATP-binding positions include 197-200 (QTRN) and 291-294 (GRDH). Residues Thr-198, Arg-199, and Asn-200 contribute to the active site. Arg-199 is a binding site for sulfate. Residue Ala-295 participates in sulfate binding. Met-333 contacts ATP. The segment at 395–573 (QGFTIFLTGY…LESQGLLDRF (179 aa)) is allosteric regulation domain; adenylyl-sulfate kinase-like. 3'-phosphoadenylyl sulfate contacts are provided by residues 434–437 (ETVR), Arg-451, 477–478 (IA), and Arg-515.

It in the N-terminal section; belongs to the sulfate adenylyltransferase family. The protein in the C-terminal section; belongs to the APS kinase family. Homohexamer. Dimer of trimers.

Its subcellular location is the cytoplasm. It catalyses the reaction sulfate + ATP + H(+) = adenosine 5'-phosphosulfate + diphosphate. Its pathway is sulfur metabolism; hydrogen sulfide biosynthesis; sulfite from sulfate: step 1/3. Its activity is regulated as follows. Allosterically inhibited by 3'-phosphoadenosine 5'-phosphosulfate (PAPS). Functionally, catalyzes the first intracellular reaction of sulfate assimilation, forming adenosine-5'-phosphosulfate (APS) from inorganic sulfate and ATP. Plays an important role in sulfate activation as a component of the biosynthesis pathway of sulfur-containing amino acids. The sequence is that of Sulfate adenylyltransferase from Chaetomium globosum (strain ATCC 6205 / CBS 148.51 / DSM 1962 / NBRC 6347 / NRRL 1970) (Soil fungus).